The sequence spans 259 residues: AM-toxin biosynthesis protein 11 (259 aa).

The tract at residues 39–66 is disordered; it reads RRSRRRPEEESIQSLSKHVSTTTQPCPT. Residues 50–64 are compositionally biased toward polar residues; sequence IQSLSKHVSTTTQPC.

Its pathway is mycotoxin biosynthesis. Part of the gene clusters that mediate the biosynthesis of AM-toxins, host-selective toxins (HSTs) causing Alternaria blotch on apple, a worldwide distributed disease. AM-toxins are cyclic depsipeptides containing the 3 residues 2-hydroxy-isovaleric acid (2-HIV), dehydroalanine, L-alanine which are common for all 3 AM-toxins I to III. The fourth precursor is L-alpha-amino-methoxyphenyl-valeric acid (L-Amv) for AM-toxin I, L-alpha-amino-phenyl-valeric acid (L-Apv) for AM-toxin II, and L-alpha-amino-hydroxyphenyl-valeric acid (L-Ahv) for AM-toxin III. AM-toxins have two target sites for affecting susceptible apple cells; they cause invagination of the plasma membrane and electrolyte loss and chloroplast disorganization. The non-ribosomal peptide synthetase AMT1 contains 4 catalytic modules and is responsible for activation of each residue in AM-toxin. The aldo-keto reductase AMT2 catalyzes the conversion of 2-keto-isovaleric acid (2-KIV) to 2-hydroxy-isovaleric acid (2-HIV), one of the precursor residues incorporated by AMT1 during AM-toxin biosynthesis, by reduction of its ketone to an alcohol. The cytochrome P450 monooxygenase AMT3 and the thioesterase AMT4 are also important for AM-toxin production, but their exact function within the AM-toxin biosynthesis are not known yet. Up to 21 proteins (including AMT1 to AMT4) are predicted to be involved in AM-toxin biosynthesis since their expression ishighly up-regulated in AM-toxin-producing cultures. The polypeptide is AM-toxin biosynthesis protein 11 (Alternaria alternata (Alternaria rot fungus)).